The following is a 262-amino-acid chain: Dehydrin COR410 (262 aa).

Disordered regions lie at residues 1–153 (MEDE…HDTD) and 187–262 (LPGG…KPSA). 2 stretches are compositionally biased toward basic and acidic residues: residues 34 to 45 (KKAEEDKEKEEE) and 53 to 74 (VSVE…KETL). Acidic residues predominate over residues 89–101 (SDEEEEEVIDDNG). Repeat copies occupy residues 106–126 (RKKK…HKDT) and 173–193 (EEEK…GHKK). A 3 X 21 AA repeats, Lys-rich region spans residues 106 to 245 (RKKKKGLKEK…MDKLPGYHKT (140 aa)). Composition is skewed to basic and acidic residues over residues 113 to 130 (KEKL…EGEH) and 187 to 196 (LPGGHKKPED). The span at 197–209 (AAAVPVTHAAPAP) shows a compositional bias: low complexity. The stretch at 225–245 (AKEKKGLLGKIMDKLPGYHKT) is repeat 3. Positions 244–262 (KTGEEDKAAAATGEHKPSA) are enriched in basic and acidic residues.

In terms of tissue distribution, expressed in roots, crown and leaves during cold acclimation.

The polypeptide is Dehydrin COR410 (COR410) (Triticum aestivum (Wheat)).